Reading from the N-terminus, the 508-residue chain is UDP-N-acetylmuramoylalanine--D-glutamate ligase (508 aa).

138-144 (GTNGKTT) contributes to the ATP binding site.

This sequence belongs to the MurCDEF family.

It localises to the cytoplasm. It carries out the reaction UDP-N-acetyl-alpha-D-muramoyl-L-alanine + D-glutamate + ATP = UDP-N-acetyl-alpha-D-muramoyl-L-alanyl-D-glutamate + ADP + phosphate + H(+). It functions in the pathway cell wall biogenesis; peptidoglycan biosynthesis. In terms of biological role, cell wall formation. Catalyzes the addition of glutamate to the nucleotide precursor UDP-N-acetylmuramoyl-L-alanine (UMA). This is UDP-N-acetylmuramoylalanine--D-glutamate ligase from Bordetella avium (strain 197N).